Here is a 220-residue protein sequence, read N- to C-terminus: Large ribosomal subunit protein bL21 (220 aa).

A disordered region spans residues S109–P158. Residues T118–K146 are compositionally biased toward basic and acidic residues.

Belongs to the bacterial ribosomal protein bL21 family. In terms of assembly, part of the 50S ribosomal subunit. Contacts protein L20.

This protein binds to 23S rRNA in the presence of protein L20. The chain is Large ribosomal subunit protein bL21 from Chelativorans sp. (strain BNC1).